The primary structure comprises 447 residues: GTPase Der (447 aa).

EngA-type G domains follow at residues 4–165 (KIIA…PEEE) and 180–357 (LQIV…KIWN). Residues 10–17 (GRPNVGKS), 57–61 (DTPGL), 119–122 (NKCE), 186–193 (GRPNAGKS), 233–237 (DTAGL), and 298–301 (NKWD) contribute to the GTP site. A KH-like domain is found at 358–443 (KKIATSKLNE…PIRFTYVKTK (86 aa)).

The protein belongs to the TRAFAC class TrmE-Era-EngA-EngB-Septin-like GTPase superfamily. EngA (Der) GTPase family. As to quaternary structure, associates with the 50S ribosomal subunit.

In terms of biological role, GTPase that plays an essential role in the late steps of ribosome biogenesis. The sequence is that of GTPase Der from Rickettsia akari (strain Hartford).